A 123-amino-acid polypeptide reads, in one-letter code: UPF0342 protein LAR_1202 (123 aa).

It belongs to the UPF0342 family.

The protein is UPF0342 protein LAR_1202 of Limosilactobacillus reuteri subsp. reuteri (strain JCM 1112) (Lactobacillus reuteri).